Consider the following 357-residue polypeptide: Chorismate synthase (357 aa).

Arg-46 is a binding site for NADP(+). FMN contacts are provided by residues 123–125 (RSS), 235–236 (NA), Gly-275, 290–294 (KPTPS), and Arg-316.

It belongs to the chorismate synthase family. Homotetramer. The cofactor is FMNH2.

The enzyme catalyses 5-O-(1-carboxyvinyl)-3-phosphoshikimate = chorismate + phosphate. Its pathway is metabolic intermediate biosynthesis; chorismate biosynthesis; chorismate from D-erythrose 4-phosphate and phosphoenolpyruvate: step 7/7. Its function is as follows. Catalyzes the anti-1,4-elimination of the C-3 phosphate and the C-6 proR hydrogen from 5-enolpyruvylshikimate-3-phosphate (EPSP) to yield chorismate, which is the branch point compound that serves as the starting substrate for the three terminal pathways of aromatic amino acid biosynthesis. This reaction introduces a second double bond into the aromatic ring system. The sequence is that of Chorismate synthase from Sulfurovum sp. (strain NBC37-1).